The chain runs to 122 residues: Large ribosomal subunit protein uL14 (122 aa).

This sequence belongs to the universal ribosomal protein uL14 family. Part of the 50S ribosomal subunit. Forms a cluster with proteins L3 and L19. In the 70S ribosome, L14 and L19 interact and together make contacts with the 16S rRNA in bridges B5 and B8.

Its function is as follows. Binds to 23S rRNA. Forms part of two intersubunit bridges in the 70S ribosome. The protein is Large ribosomal subunit protein uL14 of Anaeromyxobacter sp. (strain Fw109-5).